Reading from the N-terminus, the 220-residue chain is Large ribosomal subunit protein bL25 (220 aa).

Over residues 186-199 (ELEDEDEDEDEVAA) the composition is skewed to acidic residues. Residues 186 to 220 (ELEDEDEDEDEVAADEVPATEVDDQAAVKEGEGKE) form a disordered region. Residues 211 to 220 (AAVKEGEGKE) show a composition bias toward basic and acidic residues.

The protein belongs to the bacterial ribosomal protein bL25 family. CTC subfamily. As to quaternary structure, part of the 50S ribosomal subunit; part of the 5S rRNA/L5/L18/L25 subcomplex. Contacts the 5S rRNA. Binds to the 5S rRNA independently of L5 and L18.

In terms of biological role, this is one of the proteins that binds to the 5S RNA in the ribosome where it forms part of the central protuberance. The sequence is that of Large ribosomal subunit protein bL25 from Christiangramia forsetii (strain DSM 17595 / CGMCC 1.15422 / KT0803) (Gramella forsetii).